The chain runs to 308 residues: tRNA dimethylallyltransferase (308 aa).

An ATP-binding site is contributed by 14–21; the sequence is GPTASGKT. Substrate is bound at residue 16 to 21; the sequence is TASGKT. Interaction with substrate tRNA stretches follow at residues 39-42, 163-167, and 244-249; these read DSAL, QRLSR, and RCVGYR.

This sequence belongs to the IPP transferase family. As to quaternary structure, monomer. The cofactor is Mg(2+).

The enzyme catalyses adenosine(37) in tRNA + dimethylallyl diphosphate = N(6)-dimethylallyladenosine(37) in tRNA + diphosphate. Its function is as follows. Catalyzes the transfer of a dimethylallyl group onto the adenine at position 37 in tRNAs that read codons beginning with uridine, leading to the formation of N6-(dimethylallyl)adenosine (i(6)A). In Shewanella oneidensis (strain ATCC 700550 / JCM 31522 / CIP 106686 / LMG 19005 / NCIMB 14063 / MR-1), this protein is tRNA dimethylallyltransferase.